Here is a 336-residue protein sequence, read N- to C-terminus: Protein-glutamate methylesterase/protein-glutamine glutaminase 3 (336 aa).

Residues 2–119 enclose the Response regulatory domain; the sequence is KIAIVNDMPM…PNPREAAAPL (118 aa). At Asp53 the chain carries 4-aspartylphosphate. A CheB-type methylesterase domain is found at 147–336; sequence VSRRDRLVAI…APRLMEVFTQ (190 aa). Active-site residues include Ser159, His186, and Asp279.

The protein belongs to the CheB family. In terms of processing, phosphorylated by CheA. Phosphorylation of the N-terminal regulatory domain activates the methylesterase activity.

The protein localises to the cytoplasm. The enzyme catalyses [protein]-L-glutamate 5-O-methyl ester + H2O = L-glutamyl-[protein] + methanol + H(+). It catalyses the reaction L-glutaminyl-[protein] + H2O = L-glutamyl-[protein] + NH4(+). Its function is as follows. Involved in chemotaxis. Part of a chemotaxis signal transduction system that modulates chemotaxis in response to various stimuli. Catalyzes the demethylation of specific methylglutamate residues introduced into the chemoreceptors (methyl-accepting chemotaxis proteins or MCP) by CheR. Also mediates the irreversible deamidation of specific glutamine residues to glutamic acid. This Pseudomonas syringae pv. tomato (strain ATCC BAA-871 / DC3000) protein is Protein-glutamate methylesterase/protein-glutamine glutaminase 3.